Here is a 679-residue protein sequence, read N- to C-terminus: MSRAAPRRASQSQSTRPARGLRRPPGAQEVGQRKRPGKTQKARQAQEATKSRPATRSDVAPAGRSTRARRTRQVVDVGTRGASFVFRHRTGNAVILVLMLVAATQLFFLQVSHAAGLRAQAAGQLKVTDVQPAARGSIVDRNNDRLAFTIEARALTFQPKRIRRQLEEARKKTSAAPDPQQRLRDIAQEVAGKLNNKPDAAAVLKKLQSDETFVYLARAVDPAVASAICAKYPEVGAERQDLRQYPGGSLAANVVGGIDWDGHGLLGLEDSLDAVLAGTDGSVTYDRGSDGVVIPGSYRNRHKAVHGSTVVLTLDNDIQFYVQQQVQQAKNLSGAHNVSAVVLDAKTGEVLAMANDNTFDPSQDIGRQGDKQLGNPAVSSPFEPGSVNKIVAASAVIEHGLSSPDEVLQVPGSIQMGGVTVHDAWEHGVMPYTTTGVFGKSSNVGTLMLSQRVGPERYYDMLRKFGLGQRTGVGLPGESAGLVPPIDQWSGSTFANLPIGQGLSMTLLQMTGMYQAIANDGVRVPPRIIKATVAPDGSRTEEPRPDDIRVVSAQTAQTVRQMLRAVVQRDPMGYQQGTGPTAGVPGYQMAGKTGTAQQINPGCGCYFDDVYWITFAGIATADNPRYVIGIMLDNPARNSDGAPGHSAAPLFHNIAGWLMQRENVPLSPDPGPPLVLQAT.

Residues 1 to 74 (MSRAAPRRAS…STRARRTRQV (74 aa)) are disordered. Residues 1 to 90 (MSRAAPRRAS…GASFVFRHRT (90 aa)) are Cytoplasmic-facing. Positions 42 to 54 (ARQAQEATKSRPA) are enriched in polar residues. A helical membrane pass occupies residues 91-111 (GNAVILVLMLVAATQLFFLQV). Topologically, residues 112-679 (SHAAGLRAQA…PGPPLVLQAT (568 aa)) are extracellular. Ser386 (acyl-ester intermediate) is an active-site residue.

This sequence belongs to the transpeptidase family. In terms of assembly, interacts with Wag31. In terms of processing, cleaved by Rip1 in response to oxidative stress (H(2)O(2)), prevented by Wag31. Cleavage probably occurs near residues 102-103.

Its subcellular location is the cell membrane. It participates in cell wall biogenesis; peptidoglycan biosynthesis. Its function is as follows. Synthesis of cross-linked peptidoglycan from the lipid intermediates. The chain is Penicillin-binding protein PbpB (pbpB) from Mycobacterium tuberculosis (strain ATCC 25618 / H37Rv).